We begin with the raw amino-acid sequence, 190 residues long: Elongation factor P (190 aa).

The protein belongs to the elongation factor P family.

The protein resides in the cytoplasm. It participates in protein biosynthesis; polypeptide chain elongation. Functionally, involved in peptide bond synthesis. Stimulates efficient translation and peptide-bond synthesis on native or reconstituted 70S ribosomes in vitro. Probably functions indirectly by altering the affinity of the ribosome for aminoacyl-tRNA, thus increasing their reactivity as acceptors for peptidyl transferase. The polypeptide is Elongation factor P (Amoebophilus asiaticus (strain 5a2)).